The sequence spans 283 residues: MAEITASLVKELRERTGAGMMECKKALVEANGDIELAIDNMRKSGQAKAAKKAGRVAAEGVILARIGAGFGVLVEMNCETDFVAKDAGFLGLANEVADFALANKGTTIETLAAQFEEKRAALVAKIGENMNIRRVQYLDGQVIAQYLHGAKIGVLVAGEGSDEELKKVAMHVAASRPEFVNPEDVSAEVVAHERQIQIDIAINSGKPKEIAEKMVEGRMKKFTGEVSLTGQAFVMDPSQSVGDYLKSVNTKVTNFIRLEVGEGIEKVEEDFAAEVAKITGGNA.

The segment at 80–83 (TDFV) is involved in Mg(2+) ion dislocation from EF-Tu.

This sequence belongs to the EF-Ts family.

It is found in the cytoplasm. Functionally, associates with the EF-Tu.GDP complex and induces the exchange of GDP to GTP. It remains bound to the aminoacyl-tRNA.EF-Tu.GTP complex up to the GTP hydrolysis stage on the ribosome. This is Elongation factor Ts from Actinobacillus pleuropneumoniae serotype 5b (strain L20).